Consider the following 133-residue polypeptide: MKKHPSSPAACPCGKPRAYPDCCGRWHAGALFLQAPDAESLMRSRYSAFVLDQLDYLLQTWHPDTRPSELEPNAADVKWLGLQIKASQQQDDTHATVEFVARLRQAGRATRLHELSRFVKEEQRWYYVDGDIR.

The protein belongs to the UPF0225 family.

This is UPF0225 protein BB3385 from Bordetella bronchiseptica (strain ATCC BAA-588 / NCTC 13252 / RB50) (Alcaligenes bronchisepticus).